The primary structure comprises 278 residues: S-adenosylmethionine decarboxylase proenzyme (278 aa).

The tract at residues 96 to 115 is disordered; that stretch reads LTPESLTGESPGPLPGNKPS. Ser-126 (schiff-base intermediate with substrate; via pyruvic acid) is an active-site residue. A Pyruvic acid (Ser); by autocatalysis modification is found at Ser-126. The active-site Proton acceptor; for processing activity is His-131. The Proton donor; for catalytic activity role is filled by Cys-154.

Belongs to the prokaryotic AdoMetDC family. Type 2 subfamily. As to quaternary structure, heterooctamer of four alpha and four beta chains arranged as a tetramer of alpha/beta heterodimers. The cofactor is pyruvate. In terms of processing, is synthesized initially as an inactive proenzyme. Formation of the active enzyme involves a self-maturation process in which the active site pyruvoyl group is generated from an internal serine residue via an autocatalytic post-translational modification. Two non-identical subunits are generated from the proenzyme in this reaction, and the pyruvate is formed at the N-terminus of the alpha chain, which is derived from the carboxyl end of the proenzyme. The post-translation cleavage follows an unusual pathway, termed non-hydrolytic serinolysis, in which the side chain hydroxyl group of the serine supplies its oxygen atom to form the C-terminus of the beta chain, while the remainder of the serine residue undergoes an oxidative deamination to produce ammonia and the pyruvoyl group blocking the N-terminus of the alpha chain.

It catalyses the reaction S-adenosyl-L-methionine + H(+) = S-adenosyl 3-(methylsulfanyl)propylamine + CO2. Its pathway is amine and polyamine biosynthesis; S-adenosylmethioninamine biosynthesis; S-adenosylmethioninamine from S-adenosyl-L-methionine: step 1/1. Catalyzes the decarboxylation of S-adenosylmethionine to S-adenosylmethioninamine (dcAdoMet), the propylamine donor required for the synthesis of the polyamines spermine and spermidine from the diamine putrescine. The protein is S-adenosylmethionine decarboxylase proenzyme of Alkaliphilus metalliredigens (strain QYMF).